The following is a 647-amino-acid chain: Glutamyl-tRNA(Gln) amidotransferase subunit B, mitochondrial (647 aa).

The segment at 87–106 (QAKALKKSGHKKKKSSDNQT) is disordered. Over residues 90-100 (ALKKSGHKKKK) the composition is skewed to basic residues.

The protein belongs to the GatB/GatE family. GatB subfamily. In terms of assembly, subunit of the heterotrimeric GatCAB amidotransferase (AdT) complex, composed of A, B and C subunits.

Its subcellular location is the mitochondrion. It catalyses the reaction L-glutamyl-tRNA(Gln) + L-glutamine + ATP + H2O = L-glutaminyl-tRNA(Gln) + L-glutamate + ADP + phosphate + H(+). In terms of biological role, allows the formation of correctly charged Gln-tRNA(Gln) through the transamidation of misacylated Glu-tRNA(Gln) in the mitochondria. The reaction takes place in the presence of glutamine and ATP through an activated gamma-phospho-Glu-tRNA(Gln). In Neurospora crassa (strain ATCC 24698 / 74-OR23-1A / CBS 708.71 / DSM 1257 / FGSC 987), this protein is Glutamyl-tRNA(Gln) amidotransferase subunit B, mitochondrial.